Reading from the N-terminus, the 249-residue chain is Chymase (249 aa).

An N-terminal signal peptide occupies residues 1 to 19 (MHCLPLTLLLLLLCSRAEA). A propeptide spans 20–21 (EE) (activation peptide). The 224-residue stretch at 22 to 245 (IIGGTESKPH…YRPWINKVLK (224 aa)) folds into the Peptidase S1 domain. A disulfide bridge links Cys51 with Cys67. Residues His66 and Asp110 each act as charge relay system in the active site. Disulfide bonds link Cys144–Cys209 and Cys175–Cys188. The active-site Charge relay system is the Ser203.

This sequence belongs to the peptidase S1 family. Granzyme subfamily.

It is found in the secreted. The protein resides in the cytoplasmic granule. It catalyses the reaction Preferential cleavage: Phe-|-Xaa &gt; Tyr-|-Xaa &gt; Trp-|-Xaa &gt; Leu-|-Xaa.. Major secreted protease of mast cells with suspected roles in vasoactive peptide generation, extracellular matrix degradation, and regulation of gland secretion. This is Chymase (CMA1) from Canis lupus familiaris (Dog).